A 552-amino-acid chain; its full sequence is HTH-type transcriptional regulator SgrR (552 aa).

One can recognise an HTH marR-type domain in the interval 1–116; sequence MPSGRLQQQF…LISHLGRSFR (116 aa). A DNA-binding region (H-T-H motif) is located at residues 26 to 49; it reads LNELADLLNCSRRHMRTLLNTMQA. The interval 163 to 493 is solute-binding; that stretch reads ELEADIAHHW…RDWQGDAAQW (331 aa).

Activates the small RNA gene sgrS under glucose-phosphate stress conditions as well as yfdZ. Represses its own transcription under both stress and non-stress conditions. Might act as a sensor of the intracellular accumulation of phosphoglucose by binding these molecules in its C-terminal solute-binding domain. The chain is HTH-type transcriptional regulator SgrR from Salmonella typhimurium (strain LT2 / SGSC1412 / ATCC 700720).